The following is a 101-amino-acid chain: Large ribosomal subunit protein uL24 (101 aa).

Belongs to the universal ribosomal protein uL24 family. As to quaternary structure, part of the 50S ribosomal subunit.

Functionally, one of two assembly initiator proteins, it binds directly to the 5'-end of the 23S rRNA, where it nucleates assembly of the 50S subunit. Its function is as follows. One of the proteins that surrounds the polypeptide exit tunnel on the outside of the subunit. The sequence is that of Large ribosomal subunit protein uL24 from Elusimicrobium minutum (strain Pei191).